A 358-amino-acid polypeptide reads, in one-letter code: tRNA (guanine-N(7)-)-methyltransferase (358 aa).

The segment at M1–D29 is disordered. Residues G99 and E122–I123 each bind S-adenosyl-L-methionine. Low complexity predominate over residues T151–T186. The tract at residues T151 to T194 is disordered. Residues N209–T210 and C229 each bind S-adenosyl-L-methionine. The active site involves D232. Residue T330–E332 coordinates S-adenosyl-L-methionine.

Belongs to the class I-like SAM-binding methyltransferase superfamily. TrmB family. As to quaternary structure, forms a complex with trm82.

Its subcellular location is the nucleus. The enzyme catalyses guanosine(46) in tRNA + S-adenosyl-L-methionine = N(7)-methylguanosine(46) in tRNA + S-adenosyl-L-homocysteine. Its pathway is tRNA modification; N(7)-methylguanine-tRNA biosynthesis. Functionally, catalyzes the formation of N(7)-methylguanine at position 46 (m7G46) in tRNA. The polypeptide is tRNA (guanine-N(7)-)-methyltransferase (trm8) (Aspergillus fumigatus (strain CBS 144.89 / FGSC A1163 / CEA10) (Neosartorya fumigata)).